Reading from the N-terminus, the 499-residue chain is Putative antiporter subunit mnhD2 (499 aa).

Transmembrane regions (helical) follow at residues 3–23 (SNLL…LVFT), 32–52 (ILYI…LIYV), 78–98 (LSLV…SYGF), 108–128 (YYLP…FLTS), 130–150 (LFNL…LVTL), 161–181 (IIYV…IGLL), 206–226 (IIII…LVLF), 240–260 (LAAL…IRFF), 273–293 (PLLV…VIAY), 308–328 (IGFV…GAIF), 330–350 (LAND…LVYM), 368–388 (FFGV…PFSG), 403–423 (GNFI…YSLF), and 450–470 (TILG…PVVM).

This sequence belongs to the CPA3 antiporters (TC 2.A.63) subunit D family. In terms of assembly, may form a heterooligomeric complex that consists of seven subunits: mnhA2, mnhB2, mnhC2, mnhD2, mnhE2, mnhF2 and mnhG2.

The protein resides in the cell membrane. In Staphylococcus haemolyticus (strain JCSC1435), this protein is Putative antiporter subunit mnhD2 (mnhD2).